The following is a 314-amino-acid chain: Methionyl-tRNA formyltransferase (314 aa).

(6S)-5,6,7,8-tetrahydrofolate is bound at residue 111–114; the sequence is SLLP.

Belongs to the Fmt family.

It catalyses the reaction L-methionyl-tRNA(fMet) + (6R)-10-formyltetrahydrofolate = N-formyl-L-methionyl-tRNA(fMet) + (6S)-5,6,7,8-tetrahydrofolate + H(+). Functionally, attaches a formyl group to the free amino group of methionyl-tRNA(fMet). The formyl group appears to play a dual role in the initiator identity of N-formylmethionyl-tRNA by promoting its recognition by IF2 and preventing the misappropriation of this tRNA by the elongation apparatus. In Coxiella burnetii (strain CbuG_Q212) (Coxiella burnetii (strain Q212)), this protein is Methionyl-tRNA formyltransferase.